The chain runs to 130 residues: Riboflavin kinase (130 aa).

10–15 (GFGEGK) provides a ligand contact to CDP. Residues T39 and N41 each coordinate Mg(2+). Positions 96 and 104 each coordinate FMN. Position 109–112 (109–112 (VNLR)) interacts with CDP.

Belongs to the archaeal riboflavin kinase family. It depends on Mg(2+) as a cofactor.

It carries out the reaction riboflavin + CTP = CDP + FMN + H(+). It participates in cofactor biosynthesis; FMN biosynthesis; FMN from riboflavin (CTP route): step 1/1. Catalyzes the CTP-dependent phosphorylation of riboflavin (vitamin B2) to form flavin mononucleotide (FMN). The polypeptide is Riboflavin kinase (Methanococcus vannielii (strain ATCC 35089 / DSM 1224 / JCM 13029 / OCM 148 / SB)).